We begin with the raw amino-acid sequence, 47 residues long: Lysis protein for colicin E8 (47 aa).

The signal sequence occupies residues 1-19; the sequence is MKKITGIILLLLAVIILAA. Cys20 is lipidated: N-palmitoyl cysteine. Residue Cys20 is the site of S-diacylglycerol cysteine attachment.

It is found in the cell outer membrane. Functionally, lysis proteins are required for both colicin release and partial cell lysis. This chain is Lysis protein for colicin E8 (lys), found in Escherichia coli.